The primary structure comprises 243 residues: Small ribosomal subunit protein uS3 (243 aa).

In terms of domain architecture, KH type-2 spans 39–110; the sequence is IRTFIQKKYG…QVRINVVEVE (72 aa). A disordered region spans residues 216-243; the sequence is QTIPVGASPKRKASRRPQQFEDRSNENS. Basic and acidic residues predominate over residues 233–243; it reads QQFEDRSNENS.

The protein belongs to the universal ribosomal protein uS3 family. As to quaternary structure, part of the 30S ribosomal subunit. Forms a tight complex with proteins S10 and S14.

Its function is as follows. Binds the lower part of the 30S subunit head. Binds mRNA in the 70S ribosome, positioning it for translation. The polypeptide is Small ribosomal subunit protein uS3 (Prochlorococcus marinus (strain AS9601)).